Here is a 424-residue protein sequence, read N- to C-terminus: L-rhamnose isomerase (424 aa).

Residues His261, Asp293, and Asp295 each coordinate Mn(2+).

It belongs to the rhamnose isomerase family. Mn(2+) is required as a cofactor.

Its subcellular location is the cytoplasm. The catalysed reaction is L-rhamnopyranose = L-rhamnulose. The protein operates within carbohydrate degradation; L-rhamnose degradation; glycerone phosphate from L-rhamnose: step 1/3. Catalyzes the interconversion of L-rhamnose and L-rhamnulose. In Bacillus subtilis (strain 168), this protein is L-rhamnose isomerase.